The sequence spans 359 residues: Peptide chain release factor 1 (359 aa).

Position 236 is an N5-methylglutamine (Gln-236).

The protein belongs to the prokaryotic/mitochondrial release factor family. Methylated by PrmC. Methylation increases the termination efficiency of RF1.

Its subcellular location is the cytoplasm. Functionally, peptide chain release factor 1 directs the termination of translation in response to the peptide chain termination codons UAG and UAA. The polypeptide is Peptide chain release factor 1 (Streptococcus pyogenes serotype M3 (strain ATCC BAA-595 / MGAS315)).